Reading from the N-terminus, the 608-residue chain is Protein Spindly (608 aa).

Met1 carries the post-translational modification N-acetylmethionine. The stretch at 1 to 445 (MEADITNLRN…LKLKYEPEER (445 aa)) forms a coiled coil. Positions 465–487 (PEETEETAAASATEDGVSRLPPH) are disordered. Residues Ser516, Ser518, and Ser558 each carry the phosphoserine modification.

This sequence belongs to the Spindly family. As to quaternary structure, interacts with KNTC1 and ZW10. These interactions appear weak and may be transient or indirect. Interacts with dynein intermediate chain and dynactin (DCTN1). Interacts with the catalytically active form of USP45. Post-translationally, monoubiquitinated with'Lys-48' linkage. Deubiquitinated by USP45.

It is found in the cytoplasm. Its subcellular location is the cytoskeleton. The protein localises to the microtubule organizing center. The protein resides in the centrosome. It localises to the chromosome. It is found in the centromere. Its subcellular location is the kinetochore. The protein localises to the nucleus. The protein resides in the spindle pole. Required for the localization of dynein and dynactin to the mitotic kintochore. Dynein is believed to control the initial lateral interaction between the kinetochore and spindle microtubules and to facilitate the subsequent formation of end-on kinetochore-microtubule attachments mediated by the NDC80 complex. Also required for correct spindle orientation. Does not appear to be required for the removal of spindle assembly checkpoint (SAC) proteins from the kinetochore upon bipolar spindle attachment. Acts as an adapter protein linking the dynein motor complex to various cargos and converts dynein from a non-processive to a highly processive motor in the presence of dynactin. Facilitates the interaction between dynein and dynactin and activates dynein processivity (the ability to move along a microtubule for a long distance without falling off the track). Plays a role in cell migration. In Mus musculus (Mouse), this protein is Protein Spindly (Spdl1).